The chain runs to 255 residues: Ribonuclease PH (255 aa).

Phosphate is bound by residues Arg-86 and 124–126 (GTR).

This sequence belongs to the RNase PH family. Homohexameric ring arranged as a trimer of dimers.

The catalysed reaction is tRNA(n+1) + phosphate = tRNA(n) + a ribonucleoside 5'-diphosphate. In terms of biological role, phosphorolytic 3'-5' exoribonuclease that plays an important role in tRNA 3'-end maturation. Removes nucleotide residues following the 3'-CCA terminus of tRNAs; can also add nucleotides to the ends of RNA molecules by using nucleoside diphosphates as substrates, but this may not be physiologically important. Probably plays a role in initiation of 16S rRNA degradation (leading to ribosome degradation) during starvation. The protein is Ribonuclease PH of Aquifex aeolicus (strain VF5).